A 199-amino-acid polypeptide reads, in one-letter code: Thioredoxin reductase-like selenoprotein T (199 aa).

The first 24 residues, 1–24, serve as a signal peptide directing secretion; that stretch reads MRAAGLGLGIGLLLLAALAGPGGS. The cysteinyl-selenocysteine (Cys-Sec) cross-link spans 50–53; the sequence is CVSU. A non-standard amino acid (selenocysteine) is located at residue selenocysteine 53. The chain crosses the membrane as a helical span at residues 95 to 115; the sequence is VFKLVLIGLIIVGKDPFAFFG.

This sequence belongs to the SelWTH family. Selenoprotein T subfamily. May contain a selenide-sulfide bond between Cys-50 and Sec-53. This bond is speculated to serve as redox-active pair.

Its subcellular location is the endoplasmic reticulum membrane. It carries out the reaction [thioredoxin]-dithiol + NADP(+) = [thioredoxin]-disulfide + NADPH + H(+). Selenoprotein with thioredoxin reductase-like oxidoreductase activity. The polypeptide is Thioredoxin reductase-like selenoprotein T (Gallus gallus (Chicken)).